The primary structure comprises 285 residues: Transcription initiation factor IIE subunit beta (285 aa).

2 stretches are compositionally biased toward polar residues: residues 1 to 10 (MSSLSDQLSS) and 33 to 44 (TPTAYLNSNDGH). The tract at residues 1-56 (MSSLSDQLSSFKKKVANQPIYAKPQPRQPASPTPTAYLNSNDGHSSAASSPGSYSL) is disordered. Low complexity predominate over residues 45 to 55 (SSAASSPGSYS). Positions 67–142 (YSQPADSGVG…FTFKPLHNIR (76 aa)) form a DNA-binding region, TFIIE beta. Residues 240 to 272 (PTSVDPSTVKRAGHNQTPKQKKPKTRRGKITNT) form a disordered region. Positions 258–268 (KQKKPKTRRGK) are enriched in basic residues.

It belongs to the TFIIE beta subunit family. As to quaternary structure, TFIIE is a tetramer of two alpha (tfa1) and two beta (tfa2) subunits. TFIIE associates with RNA polymerase II via the beta subunit.

It localises to the nucleus. Recruits TFIIH to the initiation complex and stimulates the RNA polymerase II C-terminal domain kinase and DNA-dependent ATPase activities of TFIIH. Both TFIIH and TFIIE are required for promoter clearance by RNA polymerase. In Schizosaccharomyces pombe (strain 972 / ATCC 24843) (Fission yeast), this protein is Transcription initiation factor IIE subunit beta (tfa2).